Consider the following 184-residue polypeptide: MKILMVTGYKPMELNIFKEDDSRIQFIKASIEKRVREFLEEGLEWVIISGQMGVELWAADVVMELKEEYPVQLGVFPPFENQDGRWPDALKEKYEELTMTADFFKPIYKGDYQGPYQFRTKDMWLIDKSDACLLLMDEEFPGSTKYFYDTLQKTAKDYPVFTITPQDIDDVVEDLRMQDPHYWD.

It belongs to the UPF0398 family.

In Oceanobacillus iheyensis (strain DSM 14371 / CIP 107618 / JCM 11309 / KCTC 3954 / HTE831), this protein is UPF0398 protein OB1025.